The following is a 343-amino-acid chain: Glucokinase (343 aa).

18 to 23 (GDIGGT) lines the ATP pocket.

The protein belongs to the bacterial glucokinase family.

The protein resides in the cytoplasm. The catalysed reaction is D-glucose + ATP = D-glucose 6-phosphate + ADP + H(+). The sequence is that of Glucokinase from Brucella abortus (strain 2308).